Reading from the N-terminus, the 565-residue chain is FACT complex subunit ctc-1 (565 aa).

Disordered stretches follow at residues 151–173 (GNDG…ASAG) and 477–565 (LGDD…KKTA). Positions 152–165 (NDGGKSNGHSGTGG) are enriched in gly residues. 3 stretches are compositionally biased toward acidic residues: residues 478 to 489 (GDDDMASSDEEA), 500 to 522 (DEDE…AEEY), and 532 to 553 (GSEE…DDDE).

This sequence belongs to the SSRP1 family. In terms of assembly, forms a stable heterodimer with ctc-2/spt16. The dimer of ctc-1 and ctc-2 weakly associates with multiple molecules of nhp-1/nhp6 to form the FACT complex.

The protein resides in the nucleus. Its subcellular location is the chromosome. In terms of biological role, component of the FACT complex, a general chromatin factor that acts to reorganize nucleosomes. The FACT complex is involved in multiple processes that require DNA as a template such as mRNA elongation, DNA replication and DNA repair. During transcription elongation the FACT complex acts as a histone chaperone that both destabilizes and restores nucleosomal structure. It facilitates the passage of RNA polymerase II and transcription by promoting the dissociation of one histone H2A-H2B dimer from the nucleosome, then subsequently promotes the reestablishment of the nucleosome following the passage of RNA polymerase II. The sequence is that of FACT complex subunit ctc-1 (ctc-1) from Neurospora crassa (strain ATCC 24698 / 74-OR23-1A / CBS 708.71 / DSM 1257 / FGSC 987).